Consider the following 479-residue polypeptide: RAC-gamma serine/threonine-protein kinase (479 aa).

Residue S2 is modified to N-acetylserine. A PH domain is found at T5–D107. C59 and C76 are oxidised to a cystine. The Protein kinase domain occupies F148–F405. ATP-binding positions include L154–V162 and K177. The Proton acceptor role is filled by D271. Residues C293 and C307 are joined by a disulfide bond. Residue T302 is glycosylated (O-linked (GlcNAc) threonine). At T305 the chain carries Phosphothreonine; by PDPK1. An O-linked (GlcNAc) threonine glycan is attached at T309. The region spanning S406–E479 is the AGC-kinase C-terminal domain. The segment at T445 to E479 is disordered. Position 447 is a phosphothreonine (T447). Phosphoserine; by PKC/PRKCZ is present on S472. S472 is a glycosylation site (O-linked (GlcNAc) serine; alternate).

The protein belongs to the protein kinase superfamily. AGC Ser/Thr protein kinase family. RAC subfamily. In terms of assembly, interacts (via PH domain) with TCL1A; this enhances AKT3 phosphorylation and activation. Interacts with TRAF6. Interacts with KCTD20. Interacts with BTBD10. In terms of processing, phosphorylation on Thr-305 and Ser-472 is required for full activity. Phosphorylation of the activation loop at Thr-305 by PDPK1/PDK1 is a prerequisite for full activation. Phosphorylation at Ser-472 by mTORC2 in response to growth factors plays a key role in AKT1 activation by facilitating subsequent phosphorylation of the activation loop by PDPK1/PDK1. Post-translationally, ubiquitinated. When fully phosphorylated and translocated into the nucleus, undergoes 'Lys-48'-polyubiquitination catalyzed by TTC3, leading to its degradation by the proteasome. O-GlcNAcylation at Thr-302 and Thr-309 inhibits activating phosphorylation at Thr-305 via disrupting the interaction between AKT and PDPK1/PDK1. Isoform 1 is expressed in prostate, testis, uterus and mammary gland and isoform 2 is expressed in prostate, testis and mammary gland.

The protein resides in the nucleus. It is found in the cytoplasm. The protein localises to the membrane. The enzyme catalyses L-seryl-[protein] + ATP = O-phospho-L-seryl-[protein] + ADP + H(+). It carries out the reaction L-threonyl-[protein] + ATP = O-phospho-L-threonyl-[protein] + ADP + H(+). Its activity is regulated as follows. Two specific sites, one in the kinase domain (Thr-305) and the other in the C-terminal regulatory region (Ser-472), need to be phosphorylated for its full activation. IGF-1 leads to the activation of AKT3, which may play a role in regulating cell survival. Its function is as follows. AKT3 is one of 3 closely related serine/threonine-protein kinases (AKT1, AKT2 and AKT3) called the AKT kinase, and which regulate many processes including metabolism, proliferation, cell survival, growth and angiogenesis. This is mediated through serine and/or threonine phosphorylation of a range of downstream substrates. Over 100 substrate candidates have been reported so far, but for most of them, no isoform specificity has been reported. AKT3 is the least studied AKT isoform. It plays an important role in brain development and is crucial for the viability of malignant glioma cells. AKT3 isoform may also be the key molecule in up-regulation and down-regulation of MMP13 via IL13. Required for the coordination of mitochondrial biogenesis with growth factor-induced increases in cellular energy demands. Down-regulation by RNA interference reduces the expression of the phosphorylated form of BAD, resulting in the induction of caspase-dependent apoptosis. This chain is RAC-gamma serine/threonine-protein kinase (Akt3), found in Mus musculus (Mouse).